The chain runs to 1704 residues: Vitellogenin-1 (1704 aa).

The N-terminal stretch at 1–14 (MKAVVLALTLAFVA) is a signal peptide. The region spanning 22–660 (FAAGKTYVYK…DAATFMPKSF (639 aa)) is the Vitellogenin domain. 16 N-linked (GlcNAc...) asparagine glycosylation sites follow: N446, N635, N903, N908, N1019, N1054, N1080, N1121, N1174, N1285, N1322, N1375, N1379, N1405, N1456, and N1512. Over residues 1078–1109 (RRNSSSSSSSSSSSSSESRSSRSSSSSSSSSR) the composition is skewed to low complexity. The interval 1078–1213 (RRNSSSSSSS…SSDRRSKEVM (136 aa)) is disordered. Residues 1122-1204 (SSSSSSSRRS…FSDSSSSSSS (83 aa)) show a composition bias toward low complexity. Residues 1442–1617 (AECSFVEDTL…SWILPAESCR (176 aa)) form the VWFD domain. Disulfide bonds link C1444-C1580 and C1467-C1616.

Post-translationally, phosvitin, an egg yolk storage protein, is one of the most highly phosphorylated (10%) proteins in nature. The N-terminal of the blood vitellogenin is blocked. Produced by the liver, secreted into the blood and then sequestered by receptor mediated endocytosis into growing oocytes, where it is generally cleaved, giving rise to the respective yolk components composed of complex suite of small cleavage products.

Precursor of the major egg-yolk proteins that are sources of nutrients during early development of oviparous organisms. The polypeptide is Vitellogenin-1 (vtg1) (Fundulus heteroclitus (Killifish)).